The sequence spans 255 residues: Lactose phosphotransferase system repressor (255 aa).

One can recognise an HTH deoR-type domain in the interval 3-58 (KKRRLEKILDMLKIDGTITIKEIIDELDISDMTARRDLDALEADGLLTRTHGGAQL). A DNA-binding region (H-T-H motif) is located at residues 20–39 (ITIKEIIDELDISDMTARRD).

Its function is as follows. Repressor of the lactose catabolism operon. Galactose-6-phosphate is the inducer. The protein is Lactose phosphotransferase system repressor (lacR) of Lactococcus lactis subsp. lactis (Streptococcus lactis).